A 139-amino-acid chain; its full sequence is Type II methyltransferase M.AquIB (139 aa).

One can recognise an SAM-dependent MTase C5-type domain in the interval 1 to 135 (MDIKNVHIKN…KAVSEQLLDV (135 aa)). The tract at residues 38-58 (KTFGSTYRRLDPNQPSPTVTR) is disordered.

Belongs to the class I-like SAM-binding methyltransferase superfamily. C5-methyltransferase family. As to quaternary structure, heterodimer of an alpha and a beta subunit.

It carries out the reaction a 2'-deoxycytidine in DNA + S-adenosyl-L-methionine = a 5-methyl-2'-deoxycytidine in DNA + S-adenosyl-L-homocysteine + H(+). Functionally, a methylase, recognizes the double-stranded sequence 5'-CYCGRG-3', methylates C-1 on both strands, and protects the DNA from cleavage by the AquI endonuclease. This Picosynechococcus sp. (strain ATCC 27264 / PCC 7002 / PR-6) (Agmenellum quadruplicatum) protein is Type II methyltransferase M.AquIB (aquIMB).